Here is a 99-residue protein sequence, read N- to C-terminus: Large ribosomal subunit protein bL28 (99 aa).

It belongs to the bacterial ribosomal protein bL28 family.

The sequence is that of Large ribosomal subunit protein bL28 from Rhizobium etli (strain CIAT 652).